Consider the following 1215-residue polypeptide: Reverse gyrase 2 (1215 aa).

The segment at 3-44 (GGVNAVYMGLCYNCGGNIDEDRLEKGLPCARCLPSPPRRATP) adopts an RG N-terminal-type zinc-finger fold. Residues cysteine 13, cysteine 16, cysteine 31, and cysteine 34 each coordinate Zn(2+). ATP-binding positions include glutamine 89 and 106–113 (APTGVGKS). The Helicase ATP-binding domain occupies 93–249 (AKRLVKGDSF…SLVKARLKLY (157 aa)). The DEAD box motif lies at 209–212 (DDVD). Residues 614–1215 (VRVKTTLLVV…TGDVMGQSEA (602 aa)) are topoisomerase I. The Toprim domain occupies 618–783 (TTLLVVESPT…NVRRGRFHEV (166 aa)). Glutamate 624 contributes to the Mg(2+) binding site. An RG C-terminal-type zinc finger spans residues 702–729 (IKRCLDCGAQHTSSSPFCPRCGSPRQVD). Zn(2+)-binding residues include cysteine 705, cysteine 708, cysteine 719, and cysteine 722. Aspartate 752 serves as a coordination point for Mg(2+). Positions 799-1200 (EKSLIEAQKV…SVWRMVDEAV (402 aa)) constitute a Topo IA-type catalytic domain. Tyrosine 943 functions as the O-(5'-phospho-DNA)-tyrosine intermediate in the catalytic mechanism.

The protein in the N-terminal section; belongs to the DEAD box helicase family. DDVD subfamily. This sequence in the C-terminal section; belongs to the type IA topoisomerase family. Monomer. It depends on Zn(2+) as a cofactor. Mg(2+) is required as a cofactor.

It is found in the cytoplasm. The catalysed reaction is ATP + H2O = ADP + phosphate + H(+). Modifies the topological state of DNA by introducing positive supercoils in an ATP-dependent process, increasing the linking number in steps of +1. Binds to single-stranded DNA, transiently cleaves and then rejoins the ends, introducing a positive supercoil in the process. The scissile phosphodiester is attacked by the catalytic tyrosine of the enzyme, resulting in the formation of a DNA-(5'-phosphotyrosyl)-enzyme intermediate. Probably involved in rewinding DNA strands in regions of the chromosome that have opened up to allow replication, transcription, DNA repair and/or for DNA protection. The chain is Reverse gyrase 2 from Aeropyrum pernix (strain ATCC 700893 / DSM 11879 / JCM 9820 / NBRC 100138 / K1).